A 300-amino-acid polypeptide reads, in one-letter code: NAD kinase (300 aa).

The Proton acceptor role is filled by Asp-77. Residues 77–78 (DG), 151–152 (ND), His-162, Arg-179, Asp-181, and 192–197 (TAYSLS) contribute to the NAD(+) site.

The protein belongs to the NAD kinase family. The cofactor is a divalent metal cation.

It localises to the cytoplasm. It carries out the reaction NAD(+) + ATP = ADP + NADP(+) + H(+). In terms of biological role, involved in the regulation of the intracellular balance of NAD and NADP, and is a key enzyme in the biosynthesis of NADP. Catalyzes specifically the phosphorylation on 2'-hydroxyl of the adenosine moiety of NAD to yield NADP. The chain is NAD kinase from Cellvibrio japonicus (strain Ueda107) (Pseudomonas fluorescens subsp. cellulosa).